Reading from the N-terminus, the 39-residue chain is Non-specific lipid-transfer protein (39 aa).

Belongs to the plant LTP family.

Its function is as follows. Plant non-specific lipid-transfer proteins transfer phospholipids as well as galactolipids across membranes. May play a role in wax or cutin deposition in the cell walls of expanding epidermal cells and certain secretory tissues. In Musa acuminata (Banana), this protein is Non-specific lipid-transfer protein.